A 349-amino-acid polypeptide reads, in one-letter code: MIEFDNLTYLHGKPQGTGLLKANPEDFVVVEDLGFEPDGEGEHILVRILKNGCNTRFVADALAKFLKIHAREVSFAGQKDKHAVTEQWLCARVPGKEMPDLSAFQLEGCQVLEYARHKRKLRLGALKGNAFTLVLREVSNRDDVEQRLIDICVKGVPNYFGAQRFGIGGSNLQGALRWAQTNTPVRDRNKRSFWLSAARSALFNQIVAERLKKADVNQVVDGDALQLAGRGSWFVATTEELAELQRRVNDKVLMITAALPGSGEWGTQREALAFEQAAVAEETELQTLLVREKVEAARRAMLLYPQQLSWNWWDDVTVEIRFWLPAGSFATSVVRELINTTGDYAHIAE.

Residue Phe27 coordinates substrate. Residue Asp80 is the Nucleophile of the active site. Asn129 provides a ligand contact to substrate. Positions 155 to 303 (GVPNYFGAQR…VEAARRAMLL (149 aa)) constitute a TRUD domain. Substrate is bound at residue Phe329.

Belongs to the pseudouridine synthase TruD family.

The catalysed reaction is uridine(13) in tRNA = pseudouridine(13) in tRNA. In terms of biological role, responsible for synthesis of pseudouridine from uracil-13 in transfer RNAs. In Escherichia coli O6:K15:H31 (strain 536 / UPEC), this protein is tRNA pseudouridine synthase D.